The sequence spans 255 residues: 4-hydroxy-tetrahydrodipicolinate reductase (255 aa).

Residues 9–14 (GFKGRM), 89–91 (GTT), and 115–118 (APNF) contribute to the NAD(+) site. Histidine 145 functions as the Proton donor/acceptor in the catalytic mechanism. Histidine 146 provides a ligand contact to (S)-2,3,4,5-tetrahydrodipicolinate. The active-site Proton donor is lysine 149. 155–156 (GT) is a (S)-2,3,4,5-tetrahydrodipicolinate binding site.

The protein belongs to the DapB family.

The protein resides in the cytoplasm. The enzyme catalyses (S)-2,3,4,5-tetrahydrodipicolinate + NAD(+) + H2O = (2S,4S)-4-hydroxy-2,3,4,5-tetrahydrodipicolinate + NADH + H(+). It carries out the reaction (S)-2,3,4,5-tetrahydrodipicolinate + NADP(+) + H2O = (2S,4S)-4-hydroxy-2,3,4,5-tetrahydrodipicolinate + NADPH + H(+). The protein operates within amino-acid biosynthesis; L-lysine biosynthesis via DAP pathway; (S)-tetrahydrodipicolinate from L-aspartate: step 4/4. In terms of biological role, catalyzes the conversion of 4-hydroxy-tetrahydrodipicolinate (HTPA) to tetrahydrodipicolinate. The chain is 4-hydroxy-tetrahydrodipicolinate reductase from Streptococcus thermophilus (strain CNRZ 1066).